Here is a 552-residue protein sequence, read N- to C-terminus: Putative transport protein YPN_3727 (552 aa).

A run of 6 helical transmembrane segments spans residues 1 to 21 (MSAIALTVSMLALVAVLGLWI), 26 to 46 (IYGVGLGIGGVLFGGIIVGHF), 65 to 85 (FGLILFVYTIGIQVGPGFFSS), 96 to 116 (FAILMVVVGGLVTAIIHKLFA), 119 to 139 (LPIILGVFSGAVTNTPALGAA), and 158 to 178 (MGYAMAYPFGICGILLVMWLI). 2 RCK C-terminal domains span residues 192–276 (AFDS…VVGE) and 279–361 (DVTL…IVGN). Helical transmembrane passes span 371–391 (MLPVFIGVGLGVLLGSIPLFV), 393–413 (GFPAALRLGLAGGPLVVALIL), 439–459 (IVLFLSVVGLKSGGDFINTLV), 464–484 (LAWIGYGAMITGIPLLTVGIL), 493–513 (YLTLCGMLAGSMTDPPALAFA), and 530–550 (VYPLAMFLRIMSPQILAVLFW).

It belongs to the AAE transporter (TC 2.A.81) family. YidE subfamily.

It localises to the cell membrane. The protein is Putative transport protein YPN_3727 of Yersinia pestis bv. Antiqua (strain Nepal516).